The sequence spans 214 residues: Adenylate kinase (214 aa).

10-15 (GAGKGT) provides a ligand contact to ATP. The interval 30–59 (STGDMLRAAVKAQSELGRQAKALMDAGKLV) is NMP. AMP-binding positions include Thr-31, Arg-36, 57–59 (KLV), 85–88 (GFPR), and Gln-92. The segment at 122-159 (GRRVHAPSGRVYHVKFNPPKQEGKDDVTGELLTSRKDD) is LID. ATP-binding positions include Arg-123 and 132–133 (VY). Residues Arg-156 and Arg-167 each coordinate AMP. Residue Arg-200 coordinates ATP.

Belongs to the adenylate kinase family. Monomer.

Its subcellular location is the cytoplasm. It carries out the reaction AMP + ATP = 2 ADP. It functions in the pathway purine metabolism; AMP biosynthesis via salvage pathway; AMP from ADP: step 1/1. Its function is as follows. Catalyzes the reversible transfer of the terminal phosphate group between ATP and AMP. Plays an important role in cellular energy homeostasis and in adenine nucleotide metabolism. The protein is Adenylate kinase of Sodalis glossinidius (strain morsitans).